Consider the following 155-residue polypeptide: Immunoglobulin domain-containing protein oig-4 (155 aa).

The signal sequence occupies residues 1–22 (MSFRLWGRCIFFFCFLLEAIDS). N-linked (GlcNAc...) asparagine glycans are attached at residues asparagine 55 and asparagine 114. In terms of domain architecture, Ig-like C2-type spans 73–154 (GYKLLIICKA…MAKNFKAEYT (82 aa)). Cysteine 80 and cysteine 136 form a disulfide bridge.

As to quaternary structure, interacts with the non-alpha subunit of nicotinic acetylcholine receptor unc-29 and lev-10 to stabilize the complex formed between unc-29 and lev-10. In terms of tissue distribution, expressed in body wall muscle cells, the pharyngeal muscle cell pm6 and in four head neurons.

It is found in the synapse. The protein resides in the secreted. Required for the localization of acetylcholine receptors at neuromuscular junctions and for subsequently controlling the response evoked by receptor stimulation. This chain is Immunoglobulin domain-containing protein oig-4, found in Caenorhabditis elegans.